The chain runs to 174 residues: RNA pyrophosphohydrolase (174 aa).

A Nudix hydrolase domain is found at 6 to 145 (GYRPNVGMII…KRRVYWQALQ (140 aa)). The Nudix box motif lies at 38–59 (GGIDYAETPEQAMFRELEEEVG).

This sequence belongs to the Nudix hydrolase family. RppH subfamily. A divalent metal cation is required as a cofactor.

Accelerates the degradation of transcripts by removing pyrophosphate from the 5'-end of triphosphorylated RNA, leading to a more labile monophosphorylated state that can stimulate subsequent ribonuclease cleavage. The protein is RNA pyrophosphohydrolase of Acidithiobacillus ferrooxidans (strain ATCC 53993 / BNL-5-31) (Leptospirillum ferrooxidans (ATCC 53993)).